A 712-amino-acid chain; its full sequence is Secretin OutD (712 aa).

The N-terminal stretch at 1 to 27 (MLGKGIKKSWGWLGLTVLLLGSPCGWA) is a signal peptide. The N0 stretch occupies residues 28–124 (AEFSASFKGT…LANNEQPGVG (97 aa)). The N1 stretch occupies residues 126–190 (ELVTRVVPLN…DIVNTVDKTG (65 aa)). The tract at residues 191 to 264 (DREMITVSLN…MIRQLDRKQV (74 aa)) is N2. Residues 267–394 (GGTKVIYLKY…DLEQVINQLD (128 aa)) are N3. The interval 288–342 (GNGTSGNRNSSSTNSSRPSSTRSSSTLNNSNSSSSGSSSGSGSSSSSSSSSMGFG) is disordered. The secretin stretch occupies residues 399–651 (QVLVEAIIAE…LFLRPTIIRD (253 aa)). A s domain region spans residues 653-712 (QQYQQASISKYNSFNNEQQQQRGQGNSVLDNNTLRLSGGNTYTFRQVQSSISAFYQPEGR).

Belongs to the bacterial secretin family. GSP D subfamily. As to quaternary structure, forms a cylindrical channel with 15 subunits.

Its subcellular location is the cell outer membrane. Functionally, involved in a type II secretion system (T2SS, formerly general secretion pathway, GSP) for the export of proteins. Required for the translocation of the multiple pectic enzymes. This subunit forms the outer membrane channel. The polypeptide is Secretin OutD (outD) (Dickeya chrysanthemi (Pectobacterium chrysanthemi)).